The following is a 239-amino-acid chain: Ribonuclease PH (239 aa).

Phosphate is bound by residues arginine 87 and 125 to 127; that span reads GTR.

Belongs to the RNase PH family. As to quaternary structure, homohexameric ring arranged as a trimer of dimers.

The enzyme catalyses tRNA(n+1) + phosphate = tRNA(n) + a ribonucleoside 5'-diphosphate. Functionally, phosphorolytic 3'-5' exoribonuclease that plays an important role in tRNA 3'-end maturation. Removes nucleotide residues following the 3'-CCA terminus of tRNAs; can also add nucleotides to the ends of RNA molecules by using nucleoside diphosphates as substrates, but this may not be physiologically important. Probably plays a role in initiation of 16S rRNA degradation (leading to ribosome degradation) during starvation. This Pseudomonas aeruginosa (strain LESB58) protein is Ribonuclease PH.